The primary structure comprises 188 residues: Elongation factor P (188 aa).

It belongs to the elongation factor P family.

It is found in the cytoplasm. Its pathway is protein biosynthesis; polypeptide chain elongation. Functionally, involved in peptide bond synthesis. Stimulates efficient translation and peptide-bond synthesis on native or reconstituted 70S ribosomes in vitro. Probably functions indirectly by altering the affinity of the ribosome for aminoacyl-tRNA, thus increasing their reactivity as acceptors for peptidyl transferase. The chain is Elongation factor P from Rhodopseudomonas palustris (strain ATCC BAA-98 / CGA009).